The sequence spans 207 residues: Abscisic acid receptor PYL9 (207 aa).

Positions 31 to 197 (FPPSTTTATT…NLQMLAAVAE (167 aa)) are START-like. Residues lysine 74, 104–109 (ASTSTE), 131–137 (RLRNYRS), and glutamate 162 each bind abscisate. The Gate loop motif lies at 100 to 104 (SGLPA). Positions 130 to 132 (HRL) match the Latch loop motif.

This sequence belongs to the PYR/PYL/RCAR abscisic acid intracellular receptor family. Homodimer. Interacts with PP2C06. Interacts with PP2C50. Binding to PP2C50 is dependent on the presence of abscisic acid (ABA). Interacts with PP2C30 and PP2C53. Binding to PP2C30 and PP2C53 is dependent on the presence of ABA.

Its subcellular location is the cytoplasm. The protein localises to the cytosol. It localises to the nucleus. Its function is as follows. Involved in abscisic acid (ABA) signaling during seed germination and abiotic stress response. Acts as a positive regulator of ABA-mediated inhibition of seed germination, and tolerance to drought and cold stresses. Inhibits the activity of the protein phosphatases PP2C06 and PP2C09 when activated by abscisic acid (ABA). In Oryza sativa subsp. japonica (Rice), this protein is Abscisic acid receptor PYL9.